A 225-amino-acid chain; its full sequence is Cytidylate kinase (225 aa).

11-19 contacts ATP; it reads GPAGAGKGT. A compositionally biased stretch (basic and acidic residues) spans 169 to 185; sequence MDRIKSRIEERDARDQS. The interval 169 to 195 is disordered; the sequence is MDRIKSRIEERDARDQSRATAPLAAAP.

Belongs to the cytidylate kinase family. Type 1 subfamily.

It is found in the cytoplasm. It catalyses the reaction CMP + ATP = CDP + ADP. The catalysed reaction is dCMP + ATP = dCDP + ADP. This Magnetococcus marinus (strain ATCC BAA-1437 / JCM 17883 / MC-1) protein is Cytidylate kinase.